We begin with the raw amino-acid sequence, 332 residues long: MAAEEGKFDNILLAVAEKHHGGVPEFLGTLASFLRRKTDFFTGAKQTEWEKLLLDVFNKESKLAVTENYEKIKAREASQRLKAEKERAERKARKQEIDDNKICDITDEEAAAIIKEEETKKRQQLLDSAGGEPSASNRDGISKPIEKVDDESDKSELGKLMPNAGNGCTLENYTWTQTLEEVELKIPFNLTFGLRARDLVISIGKKSLKVGIKGQTPIIDGELCGEVKTEESVWVLQDSKTVMITLDKINKMNWWSRLVTTDPEISTRKINPESSKLSDLDGETRSMVEKMMYDQRQKELGLPTSEDRKKQDILEKFKQQHPEMDFSKCKFN.

The tract at residues 122 to 161 (RQQLLDSAGGEPSASNRDGISKPIEKVDDESDKSELGKLM) is disordered. Positions 168-259 (CTLENYTWTQ…NKMNWWSRLV (92 aa)) constitute a CS domain.

The protein belongs to the nudC family. As to quaternary structure, interacts with PCID2.

The protein resides in the cytoplasm. Chaperone protein with functions in nuclear localization and cytoplasmic mRNA trafficking. In postmitotic neurons, acts with nudE downstream of dar1 to ensure correct positioning of the nuclei in primary dendrites and as a consequence, is required for determining multipolar neuron morphology. Stabilizes PCID2 in the cytoplasm and thereby is required for promoting cytoplasmic mRNA trafficking. The polypeptide is Nuclear migration protein nudC (Drosophila melanogaster (Fruit fly)).